The chain runs to 368 residues: MSVKKLENGQYQVDVSFGFDPITGERIRTRPVASTRKEALELEAKLRREFQEERARKSRSVSFPTLISIYLASCEIDSKPNYYQNQKYIINKHISDYFLKSDIQKITHREITDFRKHLMETGLSNKSVNNIMTSLSKIFDTAVHEEILKRNPCDNVKRLPLTRKKMKFWRPEEFKKFISLIPQDQLLFKTFYTVAFLTGLRCGEMLALQWKDIDKILLEIDVHKSCTWLDGQFVVTTPKTKNSIRRVSINKKLLKLLERWKEAQEELFNELGIRHSHDTYIFQYKDTPSRKDIFSRKIKYFCKDSDLTPIRLHDFRHSHVALLIHQGEDYITIKERLGHGSVKTTIDVYGHLYPNKQKEMADKLDDLL.

Residues 61-143 (VSFPTLISIY…SLSKIFDTAV (83 aa)) enclose the Core-binding (CB) domain. The region spanning 164 to 362 (KKMKFWRPEE…YPNKQKEMAD (199 aa)) is the Tyr recombinase domain. Catalysis depends on residues Arg-201, Lys-239, His-313, Arg-316, and His-339. The O-(3'-phospho-DNA)-tyrosine intermediate role is filled by Tyr-349.

The protein belongs to the 'phage' integrase family.

Its function is as follows. Putative integrase that is involved in the insertion of the integrative and conjugative element ICEBs1. Required for the excision of ICEBs1 from the donor cell genome and subsequent integration in the recipient cell genome. Appears not to be transferred through the mating pore. Integration of ICEBs1 involves an attachment site in the chromosome, attB, and a site in the circular form of ICEBs1, attICEBs1. This is ICEBs1 integrase (int) from Bacillus subtilis (strain 168).